Reading from the N-terminus, the 253-residue chain is Imidazole glycerol phosphate synthase subunit HisF (253 aa).

Catalysis depends on residues Asp11 and Asp130.

Belongs to the HisA/HisF family. As to quaternary structure, heterodimer of HisH and HisF.

The protein localises to the cytoplasm. The enzyme catalyses 5-[(5-phospho-1-deoxy-D-ribulos-1-ylimino)methylamino]-1-(5-phospho-beta-D-ribosyl)imidazole-4-carboxamide + L-glutamine = D-erythro-1-(imidazol-4-yl)glycerol 3-phosphate + 5-amino-1-(5-phospho-beta-D-ribosyl)imidazole-4-carboxamide + L-glutamate + H(+). Its pathway is amino-acid biosynthesis; L-histidine biosynthesis; L-histidine from 5-phospho-alpha-D-ribose 1-diphosphate: step 5/9. Functionally, IGPS catalyzes the conversion of PRFAR and glutamine to IGP, AICAR and glutamate. The HisF subunit catalyzes the cyclization activity that produces IGP and AICAR from PRFAR using the ammonia provided by the HisH subunit. The protein is Imidazole glycerol phosphate synthase subunit HisF of Cereibacter sphaeroides (strain ATCC 17029 / ATH 2.4.9) (Rhodobacter sphaeroides).